The primary structure comprises 262 residues: Indole-3-glycerol phosphate synthase (262 aa).

Belongs to the TrpC family.

The catalysed reaction is 1-(2-carboxyphenylamino)-1-deoxy-D-ribulose 5-phosphate + H(+) = (1S,2R)-1-C-(indol-3-yl)glycerol 3-phosphate + CO2 + H2O. The protein operates within amino-acid biosynthesis; L-tryptophan biosynthesis; L-tryptophan from chorismate: step 4/5. This chain is Indole-3-glycerol phosphate synthase, found in Dechloromonas aromatica (strain RCB).